The primary structure comprises 336 residues: tRNA-cytidine(32) 2-sulfurtransferase (336 aa).

Residues 1 to 34 (MNAPEILNGAATASPADATEATQTAARAKTPLTR) form a disordered region. Low complexity predominate over residues 10-22 (AATASPADATEAT). Residues 75–80 (SGGKDS) carry the PP-loop motif motif. Cysteine 150, cysteine 153, and cysteine 241 together coordinate [4Fe-4S] cluster.

It belongs to the TtcA family. Homodimer. Mg(2+) is required as a cofactor. The cofactor is [4Fe-4S] cluster.

It is found in the cytoplasm. The enzyme catalyses cytidine(32) in tRNA + S-sulfanyl-L-cysteinyl-[cysteine desulfurase] + AH2 + ATP = 2-thiocytidine(32) in tRNA + L-cysteinyl-[cysteine desulfurase] + A + AMP + diphosphate + H(+). The protein operates within tRNA modification. Catalyzes the ATP-dependent 2-thiolation of cytidine in position 32 of tRNA, to form 2-thiocytidine (s(2)C32). The sulfur atoms are provided by the cysteine/cysteine desulfurase (IscS) system. This chain is tRNA-cytidine(32) 2-sulfurtransferase, found in Paraburkholderia phytofirmans (strain DSM 17436 / LMG 22146 / PsJN) (Burkholderia phytofirmans).